Reading from the N-terminus, the 944-residue chain is Tyrosine-protein kinase transmembrane receptor ROR2 (944 aa).

Positions 1 to 33 (MARGWVRPSRVPLCARAVWTAAALLLWTPWTAG) are cleaved as a signal peptide. At 34–403 (EVEDSEAIDT…CSPRDGSKMG (370 aa)) the chain is on the extracellular side. In terms of domain architecture, Ig-like C2-type spans 55–145 (PTLKGYFLNF…VATNGLKTIT (91 aa)). N-linked (GlcNAc...) asparagine glycosylation occurs at N70. Intrachain disulfides connect C83–C135, C174–C239, C182–C232, C223–C264, C252–C300, C256–C286, C316–C394, C337–C377, and C365–C389. In terms of domain architecture, FZ spans 169–303 (QEDGFCQPYR…SPDAANCMRI (135 aa)). N-linked (GlcNAc...) asparagine glycosylation is present at N188. The Kringle domain occupies 316–394 (CYNGSGADYR…RVELCDVPPC (79 aa)). Residue N318 is glycosylated (N-linked (GlcNAc...) asparagine). A helical transmembrane segment spans residues 404 to 424 (ILYILVPSIAIPLVIACLFFL). Residues 425–944 (VCMCRNKQKA…TEAAHVQLEA (520 aa)) lie on the Cytoplasmic side of the membrane. Positions 473–746 (VRFMEELGED…PRFKDIHSRL (274 aa)) constitute a Protein kinase domain. Residues 479–487 (LGEDRFGKV) and K507 contribute to the ATP site. D615 (proton acceptor) is an active-site residue. Position 646 is a phosphotyrosine; by autocatalysis (Y646). Residues 757–779 (SSAQTSGASNTTQTSSLSTSPVS) form a disordered region. Positions 765–779 (SNTTQTSSLSTSPVS) are enriched in low complexity. Asymmetric dimethylarginine is present on R785. Disordered regions lie at residues 850-879 (QVPP…TAPS) and 898-929 (QNIA…LGDN). Positions 857 to 872 (PKPSSHHSGSGSTSTG) are enriched in low complexity.

Belongs to the protein kinase superfamily. Tyr protein kinase family. ROR subfamily. In terms of assembly, homodimer; promotes osteogenesis. Binds YWHAB. Interacts with WTIP. Interacts with ROR2. The cofactor is Mg(2+).

It localises to the cell membrane. It catalyses the reaction L-tyrosyl-[protein] + ATP = O-phospho-L-tyrosyl-[protein] + ADP + H(+). In terms of biological role, tyrosine-protein kinase receptor which may be involved in the early formation of the chondrocytes. It seems to be required for cartilage and growth plate development. Phosphorylates YWHAB, leading to induction of osteogenesis and bone formation. In contrast, has also been shown to have very little tyrosine kinase activity in vitro. May act as a receptor for wnt ligand WNT5A which may result in the inhibition of WNT3A-mediated signaling. The protein is Tyrosine-protein kinase transmembrane receptor ROR2 (Ror2) of Mus musculus (Mouse).